Consider the following 221-residue polypeptide: Octanoyltransferase (221 aa).

In terms of domain architecture, BPL/LPL catalytic spans 31-213; the sequence is DKSADEIWLV…HFVTILGYNK (183 aa). Substrate contacts are provided by residues 70-77, 142-144, and 155-157; these read RGGQITYH, SLG, and GLA. Cysteine 173 (acyl-thioester intermediate) is an active-site residue.

It belongs to the LipB family.

Its subcellular location is the cytoplasm. The catalysed reaction is octanoyl-[ACP] + L-lysyl-[protein] = N(6)-octanoyl-L-lysyl-[protein] + holo-[ACP] + H(+). It functions in the pathway protein modification; protein lipoylation via endogenous pathway; protein N(6)-(lipoyl)lysine from octanoyl-[acyl-carrier-protein]: step 1/2. In terms of biological role, catalyzes the transfer of endogenously produced octanoic acid from octanoyl-acyl-carrier-protein onto the lipoyl domains of lipoate-dependent enzymes. Lipoyl-ACP can also act as a substrate although octanoyl-ACP is likely to be the physiological substrate. This is Octanoyltransferase from Mannheimia succiniciproducens (strain KCTC 0769BP / MBEL55E).